Consider the following 203-residue polypeptide: Dephospho-CoA kinase (203 aa).

The region spanning valine 4–glutamate 203 is the DPCK domain. Residue alanine 12 to threonine 17 coordinates ATP.

The protein belongs to the CoaE family.

The protein localises to the cytoplasm. The enzyme catalyses 3'-dephospho-CoA + ATP = ADP + CoA + H(+). The protein operates within cofactor biosynthesis; coenzyme A biosynthesis; CoA from (R)-pantothenate: step 5/5. In terms of biological role, catalyzes the phosphorylation of the 3'-hydroxyl group of dephosphocoenzyme A to form coenzyme A. This is Dephospho-CoA kinase from Staphylococcus epidermidis (strain ATCC 12228 / FDA PCI 1200).